The following is a 259-amino-acid chain: Phosphoribosylaminoimidazole-succinocarboxamide synthase (259 aa).

Belongs to the SAICAR synthetase family.

The catalysed reaction is 5-amino-1-(5-phospho-D-ribosyl)imidazole-4-carboxylate + L-aspartate + ATP = (2S)-2-[5-amino-1-(5-phospho-beta-D-ribosyl)imidazole-4-carboxamido]succinate + ADP + phosphate + 2 H(+). Its pathway is purine metabolism; IMP biosynthesis via de novo pathway; 5-amino-1-(5-phospho-D-ribosyl)imidazole-4-carboxamide from 5-amino-1-(5-phospho-D-ribosyl)imidazole-4-carboxylate: step 1/2. The sequence is that of Phosphoribosylaminoimidazole-succinocarboxamide synthase from Zymomonas mobilis subsp. mobilis (strain ATCC 31821 / ZM4 / CP4).